The primary structure comprises 353 residues: Photosystem II protein D1 (353 aa).

At T2 the chain carries N-acetylthreonine. Residue T2 is modified to Phosphothreonine. 3 consecutive transmembrane segments (helical) span residues 29–46 (YIGW…TATS), 118–133 (HFLL…EWEL), and 142–156 (WIAV…AATA). H118 contributes to the chlorophyll a binding site. Y126 serves as a coordination point for pheophytin a. [CaMn4O5] cluster contacts are provided by D170 and E189. The chain crosses the membrane as a helical span at residues 197–218 (FHMLGVAGVFGGSLFSAMHGSL). H198 is a binding site for chlorophyll a. A quinone-binding positions include H215 and 264–265 (SF). A Fe cation-binding site is contributed by H215. H272 is a Fe cation binding site. The helical transmembrane segment at 274–288 (FLAAWPVVGIWFTAL) threads the bilayer. Residues H332, E333, D342, and A344 each coordinate [CaMn4O5] cluster. The propeptide occupies 345 to 353 (AVEVPSING).

Belongs to the reaction center PufL/M/PsbA/D family. As to quaternary structure, PSII is composed of 1 copy each of membrane proteins PsbA, PsbB, PsbC, PsbD, PsbE, PsbF, PsbH, PsbI, PsbJ, PsbK, PsbL, PsbM, PsbT, PsbX, PsbY, PsbZ, Psb30/Ycf12, at least 3 peripheral proteins of the oxygen-evolving complex and a large number of cofactors. It forms dimeric complexes. The D1/D2 heterodimer binds P680, chlorophylls that are the primary electron donor of PSII, and subsequent electron acceptors. It shares a non-heme iron and each subunit binds pheophytin, quinone, additional chlorophylls, carotenoids and lipids. D1 provides most of the ligands for the Mn4-Ca-O5 cluster of the oxygen-evolving complex (OEC). There is also a Cl(-1) ion associated with D1 and D2, which is required for oxygen evolution. The PSII complex binds additional chlorophylls, carotenoids and specific lipids. is required as a cofactor. In terms of processing, tyr-161 forms a radical intermediate that is referred to as redox-active TyrZ, YZ or Y-Z. Post-translationally, C-terminally processed by CTPA; processing is essential to allow assembly of the oxygen-evolving complex and thus photosynthetic growth.

It is found in the plastid. The protein localises to the chloroplast thylakoid membrane. The enzyme catalyses 2 a plastoquinone + 4 hnu + 2 H2O = 2 a plastoquinol + O2. In terms of biological role, photosystem II (PSII) is a light-driven water:plastoquinone oxidoreductase that uses light energy to abstract electrons from H(2)O, generating O(2) and a proton gradient subsequently used for ATP formation. It consists of a core antenna complex that captures photons, and an electron transfer chain that converts photonic excitation into a charge separation. The D1/D2 (PsbA/PsbD) reaction center heterodimer binds P680, the primary electron donor of PSII as well as several subsequent electron acceptors. The chain is Photosystem II protein D1 from Cucumis sativus (Cucumber).